The primary structure comprises 112 residues: MSEDSATVAVTDDSFSTDVLGSSKPVLVDFWATWCGPCKMVAPVLEEIAAEKGDQLTVAKIDVDVDANPATARDFQVVSIPTMILFKDGAPVKRIVGAKGKAALLRELSDAL.

A Thioredoxin domain is found at 2–112 (SEDSATVAVT…ALLRELSDAL (111 aa)). Cys-35 and Cys-38 are disulfide-bonded.

The protein belongs to the thioredoxin family.

Its function is as follows. Participates in various redox reactions through the reversible oxidation of its active center dithiol to a disulfide and catalyzes dithiol-disulfide exchange reactions. This is Thioredoxin (trxA) from Mycolicibacterium smegmatis (Mycobacterium smegmatis).